The chain runs to 427 residues: ATP-sensitive inward rectifier potassium channel 12 (427 aa).

Over 1 to 77 the chain is Cytoplasmic; the sequence is MTAASRANPY…LADMFTTCVD (77 aa). Position 75 is an S-nitrosocysteine (Cys75). The chain crosses the membrane as a helical span at residues 78-104; sequence IRWRYMLLIFSLAFLASWLLFGIIFWV. A 1,2-diacyl-sn-glycero-3-phospho-(1D-myo-inositol-4,5-bisphosphate)-binding residues include Arg79 and Arg81. Over 105–129 the chain is Extracellular; the sequence is IAVAHGDLEPAEGRGRTPCVLQVHG. Cys123 and Cys155 are joined by a disulfide. Residues 130 to 146 constitute an intramembrane region (helical; Pore-forming); the sequence is FMAAFLFSIETQTTIGY. 4 residues coordinate K(+): Thr143, Ile144, Gly145, and Tyr146. The Selectivity filter signature appears at 143–148; it reads TIGYGL. Topologically, residues 147-155 are extracellular; the sequence is GLRCVTEEC. The helical transmembrane segment at 156–183 threads the bilayer; that stretch reads PVAVFMVVAQSIVGCIIDSFMIGAIMAK. Lys183 and Lys188 together coordinate a 1,2-diacyl-sn-glycero-3-phospho-(1D-myo-inositol-4,5-bisphosphate). Residues 184-427 are Cytoplasmic-facing; the sequence is MGRPKKRAQT…ERPYRRESEI (244 aa). Positions 387–427 are disordered; that stretch reads DEEDEVATDRDGRSPQPEHDFDRLQASSGALERPYRRESEI. A compositionally biased stretch (basic and acidic residues) spans 393-409; the sequence is ATDRDGRSPQPEHDFDR. The PDZ-binding motif lies at 425–427; the sequence is SEI.

The protein belongs to the inward rectifier-type potassium channel (TC 1.A.2.1) family. KCNJ12 subfamily. In terms of assembly, homotetramer. Forms heteromer with KCNJ4. Can form heteromeric channels with Kir2.6/KCNJ18. Association, via its PDZ-recognition domain, with LIN7A, LIN7B, LIN7C, DLG1, CASK and APBA1 plays a key role in its localization and trafficking. In terms of tissue distribution, highest level in cerebellum. Moderately found in kidney, forebrain and skeletal muscle. Not detected in uterus, liver and pancreas.

The protein resides in the membrane. The protein localises to the cell membrane. It is found in the sarcolemma. Its subcellular location is the T-tubule. It carries out the reaction K(+)(in) = K(+)(out). Its activity is regulated as follows. Activated by phosphatidylinositol 4,5-biphosphate (PtdIns(4,5)P2). PtdIns(4,5)P2 binding to the cytoplasmic side of the channel triggers a conformation change leading to channel opening. Inhibited by Ba(2+). In terms of biological role, inward rectifying potassium channel that probably participates in controlling the resting membrane potential in electrically excitable cells. It probably participates in establishing action potential waveform and excitability of neuronal and muscle tissues. Inward rectifier potassium channels are characterized by a greater tendency to allow potassium to flow into the cell rather than out of it. Their voltage dependence is regulated by the concentration of extracellular potassium; as external potassium is raised, the voltage range of the channel opening shifts to more positive voltages. The inward rectification is mainly due to the blockage of outward current by internal magnesium. The sequence is that of ATP-sensitive inward rectifier potassium channel 12 (Kcnj12) from Rattus norvegicus (Rat).